Consider the following 556-residue polypeptide: Thermosome subunit beta (556 aa).

Residues 530-556 (LSTDKGDDDGGAGGMGGGMGGGMGGMM) are disordered. The segment covering 540–556 (GAGGMGGGMGGGMGGMM) has biased composition (gly residues).

Belongs to the TCP-1 chaperonin family. Forms an oligomeric complex of eight-membered rings.

Its function is as follows. Molecular chaperone; binds unfolded polypeptides in vitro, and has a weak ATPase activity. This is Thermosome subunit beta (thsB) from Halobacterium salinarum (strain ATCC 700922 / JCM 11081 / NRC-1) (Halobacterium halobium).